The following is a 347-amino-acid chain: Putative phosphoesterase 078R (347 aa).

3 residues coordinate a divalent metal cation: aspartate 52, asparagine 87, and histidine 211.

This sequence belongs to the metallophosphoesterase superfamily. IIV-6 244L family.

The protein is Putative phosphoesterase 078R of Invertebrate iridescent virus 3 (IIV-3).